The chain runs to 353 residues: UPF0283 membrane protein YcjF (353 aa).

Helical transmembrane passes span Met70–Thr90, Val100–Val120, and Glu213–Trp233.

This sequence belongs to the UPF0283 family.

Its subcellular location is the cell inner membrane. This chain is UPF0283 membrane protein YcjF, found in Escherichia fergusonii (strain ATCC 35469 / DSM 13698 / CCUG 18766 / IAM 14443 / JCM 21226 / LMG 7866 / NBRC 102419 / NCTC 12128 / CDC 0568-73).